The sequence spans 433 residues: Histidinol dehydrogenase 2 (433 aa).

3 residues coordinate NAD(+): Tyr130, Gln192, and Asn215. Substrate-binding residues include Ser238, Gln260, and His263. The Zn(2+) site is built by Gln260 and His263. Catalysis depends on proton acceptor residues Glu328 and His329. Substrate contacts are provided by His329, Asp362, Glu416, and His421. Position 362 (Asp362) interacts with Zn(2+). Residue His421 coordinates Zn(2+).

This sequence belongs to the histidinol dehydrogenase family. It depends on Zn(2+) as a cofactor.

The enzyme catalyses L-histidinol + 2 NAD(+) + H2O = L-histidine + 2 NADH + 3 H(+). It functions in the pathway amino-acid biosynthesis; L-histidine biosynthesis; L-histidine from 5-phospho-alpha-D-ribose 1-diphosphate: step 9/9. Catalyzes the sequential NAD-dependent oxidations of L-histidinol to L-histidinaldehyde and then to L-histidine. In Trichormus variabilis (strain ATCC 29413 / PCC 7937) (Anabaena variabilis), this protein is Histidinol dehydrogenase 2.